We begin with the raw amino-acid sequence, 456 residues long: MICGSKTKSYLKSQNLKILGQGKLNGIVEISGAKNSALVLLASSLLTNEKIILENVPFLTDIEKMGNILKNLGVNLVRKNNQLEIDPTTISIKELPYELVKGLRASFFCIGALLTKFGEAQVPLPGGCNIGSRPIEEHINGLIALGAEIIIEKGIVKAKIRGNKNRLHGTHIKLNCPSVGATETLIMAASLAKGRTTIENAAREPEVQDLCQMLNKMGAKIYDSGKETIIIDGVNKLGGCTHKVIPDRIEAGTFLIAAAATSSSITISPVIPHHLEAVTNKLQESGSKITIKGNSISIKSKEIKGVDIETAPFPGFPTDLQAPFTTLMTIANGESKITETIFENRMNHIYLLNEMGASIKLNKNVAHIKGVKTINGMNLVGSDLRSSAALIIAGIIAKGSSNFYGLEHLDRGYENFELKLKNLGVKIIREISKNTFEENGYKIESKSENLSKLGAA.

A phosphoenolpyruvate-binding site is contributed by 34-35 (KN). Arg104 is a UDP-N-acetyl-alpha-D-glucosamine binding site. The active-site Proton donor is the Cys128. A 2-(S-cysteinyl)pyruvic acid O-phosphothioketal modification is found at Cys128. Residues Asp319 and Ile341 each coordinate UDP-N-acetyl-alpha-D-glucosamine.

It belongs to the EPSP synthase family. MurA subfamily.

The protein localises to the cytoplasm. It carries out the reaction phosphoenolpyruvate + UDP-N-acetyl-alpha-D-glucosamine = UDP-N-acetyl-3-O-(1-carboxyvinyl)-alpha-D-glucosamine + phosphate. Its pathway is cell wall biogenesis; peptidoglycan biosynthesis. Cell wall formation. Adds enolpyruvyl to UDP-N-acetylglucosamine. The protein is UDP-N-acetylglucosamine 1-carboxyvinyltransferase of Prochlorococcus marinus (strain AS9601).